Reading from the N-terminus, the 462-residue chain is MKQQAKSRKPQQPEYIFQVETLSHEGRGIAHYGSHPDHPADKHGKKVFIRYALPGETVKAQITHEAKRLEEAEMVELLAEPSANRVEAVCPHYGICGGCSMQHIHPDEQIHLKQNVLQSHLQHFAGIQPEQWLEPIRSLQSDYRRRARIGVRYLPKQDRLILGFREHHSNRLTSIHTCSVLDKKLSDNLPELRNLLQSLKGKAHIGHVELAKGDHEISLLVRHIEKLNNADVNQLRQFALHKGWQLYLQPKDQSLRRIDEEQGAMRLHYALNAFDVNFAFSPLDFTQVNATVNEQMVQLACELLQLQQGERVLDLFCGLGNFSLPLARCVGAKGQVVGVEASEEMVQRATDNAKRNNLVQASFFSQDLTKDFSHHSWANQGFDALLIDPPRAGAYEIMQYVPNFGAKRIVYVSCNPATLARDAGVLVQHGYQLKKAAVMDMFTHTEHVESIALFEKIQEIND.

Residues 6-76 form the TRAM domain; the sequence is KSRKPQQPEY…KRLEEAEMVE (71 aa). [4Fe-4S] cluster-binding residues include cysteine 90, cysteine 96, cysteine 99, and cysteine 178. Residues glutamine 287, phenylalanine 316, asparagine 321, glutamate 340, aspartate 367, and aspartate 388 each coordinate S-adenosyl-L-methionine. Cysteine 414 serves as the catalytic Nucleophile.

This sequence belongs to the class I-like SAM-binding methyltransferase superfamily. RNA M5U methyltransferase family. RlmD subfamily.

The enzyme catalyses uridine(1939) in 23S rRNA + S-adenosyl-L-methionine = 5-methyluridine(1939) in 23S rRNA + S-adenosyl-L-homocysteine + H(+). Catalyzes the formation of 5-methyl-uridine at position 1939 (m5U1939) in 23S rRNA. In Acinetobacter baumannii (strain AB0057), this protein is 23S rRNA (uracil(1939)-C(5))-methyltransferase RlmD.